The primary structure comprises 368 residues: 3-isopropylmalate dehydrogenase (368 aa).

NAD(+) is bound at residue G79–E91. The substrate site is built by R98, R108, R137, and D226. Positions 226, 251, and 255 each coordinate Mg(2+). G291 to N303 is a binding site for NAD(+).

The protein belongs to the isocitrate and isopropylmalate dehydrogenases family. As to quaternary structure, homodimer. It depends on Mg(2+) as a cofactor. Requires Mn(2+) as cofactor.

It localises to the cytoplasm. It catalyses the reaction (2R,3S)-3-isopropylmalate + NAD(+) = 4-methyl-2-oxopentanoate + CO2 + NADH. Its pathway is amino-acid biosynthesis; L-leucine biosynthesis; L-leucine from 3-methyl-2-oxobutanoate: step 3/4. In terms of biological role, catalyzes the oxidation of 3-carboxy-2-hydroxy-4-methylpentanoate (3-isopropylmalate) to 3-carboxy-4-methyl-2-oxopentanoate. The product decarboxylates to 4-methyl-2 oxopentanoate. The polypeptide is 3-isopropylmalate dehydrogenase (LEU1) (Sordaria macrospora).